Consider the following 561-residue polypeptide: Dihydroxy-acid dehydratase (561 aa).

D80 contacts Mg(2+). Residue C121 participates in [2Fe-2S] cluster binding. D122 and K123 together coordinate Mg(2+). Residue K123 is modified to N6-carboxylysine. C194 contacts [2Fe-2S] cluster. E448 contributes to the Mg(2+) binding site. The active-site Proton acceptor is S474.

Belongs to the IlvD/Edd family. Homodimer. [2Fe-2S] cluster is required as a cofactor. It depends on Mg(2+) as a cofactor.

The enzyme catalyses (2R)-2,3-dihydroxy-3-methylbutanoate = 3-methyl-2-oxobutanoate + H2O. The catalysed reaction is (2R,3R)-2,3-dihydroxy-3-methylpentanoate = (S)-3-methyl-2-oxopentanoate + H2O. It functions in the pathway amino-acid biosynthesis; L-isoleucine biosynthesis; L-isoleucine from 2-oxobutanoate: step 3/4. It participates in amino-acid biosynthesis; L-valine biosynthesis; L-valine from pyruvate: step 3/4. Functionally, functions in the biosynthesis of branched-chain amino acids. Catalyzes the dehydration of (2R,3R)-2,3-dihydroxy-3-methylpentanoate (2,3-dihydroxy-3-methylvalerate) into 2-oxo-3-methylpentanoate (2-oxo-3-methylvalerate) and of (2R)-2,3-dihydroxy-3-methylbutanoate (2,3-dihydroxyisovalerate) into 2-oxo-3-methylbutanoate (2-oxoisovalerate), the penultimate precursor to L-isoleucine and L-valine, respectively. This chain is Dihydroxy-acid dehydratase, found in Anaeromyxobacter sp. (strain Fw109-5).